Reading from the N-terminus, the 53-residue chain is Rubredoxin (53 aa).

In terms of domain architecture, Rubredoxin-like spans 1 to 52; sequence MAKWRCKICGYIYDEDEGDPDNGISPGTKFEDLPDDWVCPLCGAPKSEFERI. The Fe cation site is built by Cys-6, Cys-9, Cys-39, and Cys-42.

This sequence belongs to the rubredoxin family. Requires Fe(3+) as cofactor.

Its function is as follows. Rubredoxin is a small nonheme, iron protein lacking acid-labile sulfide. Its single Fe, chelated to 4 Cys, functions as an electron acceptor and may also stabilize the conformation of the molecule. In Pyrococcus abyssi (strain GE5 / Orsay), this protein is Rubredoxin (rub).